The chain runs to 674 residues: Phosphopantothenoylcysteine decarboxylase subunit VHS3 (674 aa).

Disordered regions lie at residues 1-164 (MTNK…SILS), 190-230 (LNSD…RPSV), 348-368 (QHNSIDTSFNSTNSNAGNITG), 384-426 (TSSN…SNVV), and 575-674 (VSAG…LQRS). A compositionally biased stretch (polar residues) spans 15-81 (ASNTLSGAEQ…TSGAVVSNTP (67 aa)). A Phosphothreonine modification is found at threonine 90. Over residues 106 to 116 (EQTPPNQVARQ) the composition is skewed to polar residues. Residues 137 to 150 (NLKDINTKVPKDGE) are compositionally biased toward basic and acidic residues. The segment covering 152–164 (SASSFSTPTSILS) has biased composition (polar residues). The span at 198 to 212 (SPRKEHPHFYVEDPL) shows a compositional bias: basic and acidic residues. Residues 214 to 230 (TPSVRSRSNSTSPRPSV) are compositionally biased toward low complexity. Polar residues predominate over residues 351–368 (SIDTSFNSTNSNAGNITG). Positions 384-395 (TSSNSAASQTNN) are enriched in low complexity. Residues 403-426 (MASTTGFPSTLGGSRTYSNSSNVV) are compositionally biased toward polar residues. The segment covering 580 to 591 (EEEEDEDNDEED) has biased composition (acidic residues). Basic and acidic residues predominate over residues 592 to 602 (DNKKNDTGGKD). Residues 603 to 660 (EDNDDDDDDDDDDDDDDDDDDDDDDDDDDDDDDDDDDDDDDDDDDDDDEDDEDEDEDD) show a composition bias toward acidic residues. A compositionally biased stretch (basic and acidic residues) spans 661 to 674 (EGKKKEDKGGLQRS).

This sequence belongs to the HFCD (homooligomeric flavin containing Cys decarboxylase) superfamily. Interacts with the C-terminal domain of PPZ1. Component of the phosphopantothenoylcysteine decarboxylase (PPCDC) complex, a heterotrimer composed of CAB3, SIS2 and VHS3.

Its function is as follows. Component of the phosphopantothenoylcysteine decarboxylase (PPCDC) involved in the coenzyme A synthesis. Acts as an inhibitory subunit of protein phosphatase PPZ1, which is involved in many cellular processes such as G1-S transition or salt tolerance. The sequence is that of Phosphopantothenoylcysteine decarboxylase subunit VHS3 (VHS3) from Saccharomyces cerevisiae (strain ATCC 204508 / S288c) (Baker's yeast).